A 392-amino-acid polypeptide reads, in one-letter code: Norsolorinic acid reductase B (392 aa).

Residue aspartate 75 coordinates NADP(+). Tyrosine 80 serves as the catalytic Proton donor. NADP(+)-binding positions include 184-185, glutamine 210, 239-249, and 311-319; these read SD, GTLGQGSFQTE, and RKLEHIQGN. Residues 242–263 are disordered; sequence GQGSFQTEEGRKQREKDNPGRK. Positions 249-261 are enriched in basic and acidic residues; sequence EEGRKQREKDNPG.

This sequence belongs to the aldo/keto reductase family. Aldo/keto reductase 2 subfamily.

Its pathway is mycotoxin biosynthesis. In terms of biological role, norsolorinic acid reductase; part of the fragmented gene cluster that mediates the biosynthesis of dothistromin (DOTH), a polyketide toxin very similar in structure to the aflatoxin precursor, versicolorin B. The first step of the pathway is the conversion of acetate to norsolorinic acid (NOR) and requires the fatty acid synthase subunits hexA and hexB, as well as the polyketide synthase pksA. PksA combines a hexanoyl starter unit and 7 malonyl-CoA extender units to synthesize the precursor NOR. The hexanoyl starter unit is provided to the acyl-carrier protein (ACP) domain by the fungal fatty acid synthase hexA/hexB. The second step is the conversion of NOR to averantin (AVN) and requires the norsolorinic acid ketoreductase nor1, which catalyzes the dehydration of norsolorinic acid to form (1'S)-averantin. The cytochrome P450 monooxygenase avnA then catalyzes the hydroxylation of AVN to 5'hydroxyaverantin (HAVN). The next step is performed by adhA that transforms HAVN to averufin (AVF). Averufin might then be converted to hydroxyversicolorone by cypX and avfA. Hydroxyversicolorone is further converted versiconal hemiacetal acetate (VHA) by moxY. VHA is then the substrate for the versiconal hemiacetal acetate esterase est1 to yield versiconal (VAL). Versicolorin B synthase vbsA then converts VAL to versicolorin B (VERB) by closing the bisfuran ring. Then, the activity of the versicolorin B desaturase verB leads to versicolorin A (VERA). DotB, a predicted chloroperoxidase, may perform epoxidation of the A-ring of VERA. Alternatively, a cytochrome P450, such as cypX or avnA could catalyze this step. It is also possible that another, uncharacterized, cytochrome P450 enzyme is responsible for this step. Opening of the epoxide could potentially be achieved by the epoxide hydrolase epoA. However, epoA seems not to be required for DOTH biosynthesis, but other epoxide hydrolases may have the ability to complement this hydrolysis. Alternatively, opening of the epoxide ring could be achieved non-enzymatically. The next step is the deoxygenation of ring A to yield the 5,8-dihydroxyanthraquinone which is most likely catalyzed by the NADPH dehydrogenase encoded by ver1. The last stages of DOTH biosynthesis are proposed to involve hydroxylation of the bisfuran. OrdB and norB might have oxidative roles here. An alternative possibility is that cytochrome P450 monoogenases such as avnA and cypX might perform these steps in addition to previously proposed steps. This is Norsolorinic acid reductase B from Dothistroma septosporum (strain NZE10 / CBS 128990) (Red band needle blight fungus).